The sequence spans 566 residues: MARRLATASLAVLAAAATALTAPTPAAAAPPGAKDVTAVLFEWKFASVARACTDSLGPAGYGYVQVSPPQEHIQGSQWWTSYQPVSYKIAGRLGDRAAFKSMVDTCHAAGVKVVADSVINHMAAGSGTGTGGSAYQKYDYPGIWSGADMDDCRSEINDYGNRANVQNCELVGLADLDTGEPYVRDRIAAYLNDLLLLGVDGFRIDAAKHMPAADLTAIKAKVGNGSTYWKQEAIHGAGEAVQPSEYLGTGDVQEFRYARDLKRVFQNENLAHLKNFGEDWGYMASGKSAVFVDNHDTERGGDTLNYKNGSAYTLAGVFMLAWPYGSPDVHSGYEFTDHDAGPPNGGTVNACYSDGWKCQHAWPELSSMVGLRNTASGQPVTNWWDNGGDQIAFGRGDKAYVAINHEGSALNRTFQSGLPGGAYCDVQSGRSVTVGSDGTFTATVAAGTALALHTGARTCSGGGTGPGTGQTSASFHVNATTAWGENIYVTGDQAALGNWDPARALKLDPAAYPVWKLDVPLAAGTPFQYKYLRKDAAGKAVWESGANRTATVGTTGALTLNDTWRG.

A signal peptide spans 1 to 28 (MARRLATASLAVLAAAATALTAPTPAAA). Asparagine 120, glutamine 166, and aspartate 175 together coordinate Ca(2+). Aspartate 205 acts as the Nucleophile in catalysis. Histidine 209 is a binding site for Ca(2+). Glutamate 232 acts as the Proton donor in catalysis. The 102-residue stretch at 465–566 (GPGTGQTSAS…ALTLNDTWRG (102 aa)) folds into the CBM20 domain.

This sequence belongs to the glycosyl hydrolase 13 family. Monomer. The cofactor is Ca(2+).

The catalysed reaction is Endohydrolysis of (1-&gt;4)-alpha-D-glucosidic linkages in polysaccharides containing three or more (1-&gt;4)-alpha-linked D-glucose units.. This Streptomyces griseus protein is Alpha-amylase (amy).